The chain runs to 330 residues: G-protein coupled bile acid receptor 1 (330 aa).

At 1–19 (MTPNSTGEVPSPIPKGALG) the chain is on the extracellular side. Asn4 carries N-linked (GlcNAc...) asparagine glycosylation. The helical transmembrane segment at 20–40 (LSLALASLIITANLLLALGIA) threads the bilayer. At 41–50 (WDRRLRSPPA) the chain is on the cytoplasmic side. A helical membrane pass occupies residues 51–71 (GCFFLSLLLAGLLTGLALPTL). Topologically, residues 72–85 (PGLWNQSRRGYWSC) are extracellular. N-linked (GlcNAc...) asparagine glycosylation is present at Asn76. A disulfide bridge connects residues Cys85 and Cys155. The chain crosses the membrane as a helical span at residues 86-106 (LLVYLAPNFSFLSLLANLLLV). At 107–125 (HGERYMAVLRPLQPPGSIR) the chain is on the cytoplasmic side. The chain crosses the membrane as a helical span at residues 126–146 (LALLLTWAGPLLFASLPALGW). The Extracellular segment spans residues 147–165 (NHWTPGANCSSQAIFPAPY). A helical membrane pass occupies residues 166–186 (LYLEVYGLLLPAVGAAAFLSV). Residues 187-228 (RVLATAHRQLQDICRLERAVCRDEPSALARALTWRQARAQAG) are Cytoplasmic-facing. A helical membrane pass occupies residues 229–249 (AMLLFGLCWGPYVATLLLSVL). The Extracellular segment spans residues 250 to 261 (AYEQRPPLGPGT). A helical membrane pass occupies residues 262-282 (LLSLLSLGSASAAAVPVAMGL). Over 283–330 (GDQRYTAPWRAAAQRCLQGLWGRASRDSPGPSIAYHPSSQSSVDLDLN) the chain is Cytoplasmic. Positions 309–330 (DSPGPSIAYHPSSQSSVDLDLN) are disordered. The span at 319-330 (PSSQSSVDLDLN) shows a compositional bias: polar residues.

Belongs to the G-protein coupled receptor 1 family. In terms of tissue distribution, ubiquitously expressed. Expressed at higher level in spleen and placenta. Expressed at lower level in other tissues. In digestive tissues, it is expressed in stomach, duodenum, ileocecum, ileum, jejunum, ascending colon, transverse colon, descending colon, cecum and liver, but not in esophagus and rectum.

It is found in the cell membrane. Receptor for bile acid. Bile acid-binding induces its internalization, activation of extracellular signal-regulated kinase and intracellular cAMP production. May be involved in the suppression of macrophage functions by bile acids. This is G-protein coupled bile acid receptor 1 (GPBAR1) from Homo sapiens (Human).